The sequence spans 265 residues: Transcription factor BHLH089 (265 aa).

Residues 1 to 132 (MDPAPTLAAE…PPPPEPPKQD (132 aa)) form a disordered region. 2 stretches are compositionally biased toward gly residues: residues 17 to 29 (LGGG…GGRG) and 44 to 53 (SRGGGGGGGA). Over residues 95–105 (SKSSGDNSSLR) the composition is skewed to polar residues. The tract at residues 142–155 (QATDSHSLAERARR) is basic motif; degenerate. One can recognise a bHLH domain in the interval 142–192 (QATDSHSLAERARREKISERMKILQDLVPGCNKVIGKASVLDEIINYIQAL). The interval 156-192 (EKISERMKILQDLVPGCNKVIGKASVLDEIINYIQAL) is helix-loop-helix motif.

This sequence belongs to the bHLH protein family. In terms of assembly, interacts with RSS3.

It is found in the nucleus. In terms of biological role, transcription factor that may regulate jasmonate-regulated genes. The chain is Transcription factor BHLH089 from Oryza sativa subsp. japonica (Rice).